We begin with the raw amino-acid sequence, 357 residues long: Alanine racemase (357 aa).

Residue K34 is the Proton acceptor; specific for D-alanine of the active site. An N6-(pyridoxal phosphate)lysine modification is found at K34. Residue R127 coordinates substrate. The active-site Proton acceptor; specific for L-alanine is the Y252. M301 serves as a coordination point for substrate.

It belongs to the alanine racemase family. The cofactor is pyridoxal 5'-phosphate.

The catalysed reaction is L-alanine = D-alanine. The protein operates within amino-acid biosynthesis; D-alanine biosynthesis; D-alanine from L-alanine: step 1/1. Its function is as follows. Catalyzes the interconversion of L-alanine and D-alanine. May also act on other amino acids. The protein is Alanine racemase (alr) of Dichelobacter nodosus (strain VCS1703A).